Reading from the N-terminus, the 182-residue chain is Ribosome hibernation promotion factor (182 aa).

The protein belongs to the HPF/YfiA ribosome-associated protein family. Long HPF subfamily. Interacts with 100S ribosomes.

Its subcellular location is the cytoplasm. In terms of biological role, required for dimerization of active 70S ribosomes into 100S ribosomes in stationary phase; 100S ribosomes are translationally inactive and sometimes present during exponential growth. This is Ribosome hibernation promotion factor from Streptococcus pyogenes serotype M6 (strain ATCC BAA-946 / MGAS10394).